The primary structure comprises 395 residues: Probable nitrate/nitrite transporter NarK2 (395 aa).

12 consecutive transmembrane segments (helical) span residues 8–28 (LVLA…IGPL), 45–65 (LLVA…GPLT), 72–92 (AMLI…GVAA), 98–118 (ALLV…AVGI), 131–151 (GFST…AFFT), 157–177 (WFGL…TAVV), 205–225 (LPVT…FVAF), 244–266 (AGAR…GWLS), 274–294 (VVLA…LQPP), 301–321 (ATFI…FAWV), 333–353 (VTGI…LVMG), and 365–385 (VGLL…ALHA).

The protein belongs to the major facilitator superfamily. Nitrate/nitrite porter (TC 2.A.1.8) family.

It is found in the cell membrane. In terms of biological role, involved in excretion of nitrite produced by the dissimilatory reduction of nitrate. This Mycobacterium tuberculosis (strain CDC 1551 / Oshkosh) protein is Probable nitrate/nitrite transporter NarK2 (narK2).